An 88-amino-acid polypeptide reads, in one-letter code: Small ribosomal subunit protein bS20 (88 aa).

Positions 1–27 (MANIPSAKKRARQAEKRRKHNQSQRSM) are disordered. Positions 7-22 (AKKRARQAEKRRKHNQ) are enriched in basic residues.

The protein belongs to the bacterial ribosomal protein bS20 family.

In terms of biological role, binds directly to 16S ribosomal RNA. The chain is Small ribosomal subunit protein bS20 from Alkalilimnicola ehrlichii (strain ATCC BAA-1101 / DSM 17681 / MLHE-1).